The primary structure comprises 466 residues: 55 kDa erythrocyte membrane protein (466 aa).

Threonine 2 is subject to N-acetylthreonine. Serine 19 is modified (phosphoserine). Position 49 is a phosphothreonine (threonine 49). Serine 57 and serine 110 each carry phosphoserine. The 82-residue stretch at 71 to 152 folds into the PDZ domain; it reads LIQFEKVTEE…MISLKVIPNQ (82 aa). In terms of domain architecture, SH3 spans 158 to 228; the sequence is ALQMFMRAQF…PSPELQEWRV (71 aa). Residue serine 243 is modified to Phosphoserine. Residues 268–466 are interaction with PALS1; it reads VVSYEEVVRL…PQWVPVSWVY (199 aa). The Guanylate kinase-like domain occupies 282 to 451; it reads RKTLVLIGAS…TLKTLQETFD (170 aa).

Belongs to the MAGUK family. As to quaternary structure, heterodimer with PALS1. Interacts with DLG5 and NF2. Interacts (via guanylate kinase-like domain) with WHRN (via third PDZ domain). Interacts with PALS1. Post-translationally, palmitoylated.

The protein resides in the cell membrane. It is found in the cell projection. It localises to the stereocilium. Essential regulator of neutrophil polarity. Regulates neutrophil polarization by regulating AKT1 phosphorylation through a mechanism that is independent of PIK3CG activity. The sequence is that of 55 kDa erythrocyte membrane protein (MPP1) from Bos taurus (Bovine).